A 907-amino-acid polypeptide reads, in one-letter code: Clathrin coat assembly protein AP180 (907 aa).

Residues 14–145 (QYSVTGSAVA…FSYRQMAFDF (132 aa)) enclose the ENTH domain. Disordered stretches follow at residues 285–326 (LEGK…DTSP), 342–380 (TSKP…TAWG), 393–414 (SVPS…PTTT), and 505–525 (VPVV…APSP). Residues serine 296, serine 300, and serine 306 each carry the phosphoserine modification. Residues 302-324 (LSKSSPATTVTSPNSTPAKTIDT) are compositionally biased toward polar residues. Threonine 310 is a glycosylation site (O-linked (GlcNAc) threonine). Serine 313 is subject to Phosphoserine. Threonine 317 carries the post-translational modification Phosphothreonine. A compositionally biased stretch (low complexity) spans 505-515 (VPVVTPTASTA). Over residues 516–525 (PPVPATAPSP) the composition is skewed to pro residues. Phosphoserine is present on residues serine 596, serine 602, serine 623, serine 629, and serine 763. Arginine 865 bears the Asymmetric dimethylarginine; alternate mark. Arginine 865 carries the post-translational modification Omega-N-methylarginine; alternate. A disordered region spans residues 867 to 907 (PFGAAAVPGTQLSPSPTPASQSPKKPPAKDPLADLNIKDFL). The segment covering 893 to 907 (PAKDPLADLNIKDFL) has biased composition (basic and acidic residues).

This sequence belongs to the PICALM/SNAP91 family. In terms of assembly, binds AP2A2. Interacts with AP2B1; clathrin competes with SNAP91. Thr-310 can be modified by the addition of N-acetylglucosamine which can be further phosphorylated. There is no evidence for direct Thr-310 phosphorylation.

The protein localises to the cell membrane. It localises to the membrane. It is found in the coated pit. In terms of biological role, adaptins are components of the adapter complexes which link clathrin to receptors in coated vesicles. Clathrin-associated protein complexes are believed to interact with the cytoplasmic tails of membrane proteins, leading to their selection and concentration. Binding of AP180 to clathrin triskelia induces their assembly into 60-70 nm coats. The chain is Clathrin coat assembly protein AP180 (SNAP91) from Homo sapiens (Human).